The following is a 579-amino-acid chain: L-arabinonate dehydratase (579 aa).

C59 contributes to the [2Fe-2S] cluster binding site. Position 91 (E91) interacts with Mg(2+). Position 127 (C127) interacts with [2Fe-2S] cluster. D128 contacts Mg(2+). [2Fe-2S] cluster is bound at residue C200. E453 contacts Mg(2+).

The protein belongs to the IlvD/Edd family. Homotetramer. The cofactor is [2Fe-2S] cluster. Mg(2+) serves as cofactor.

The catalysed reaction is L-arabinonate = 2-dehydro-3-deoxy-L-arabinonate + H2O. It carries out the reaction D-galactonate = 2-dehydro-3-deoxy-D-galactonate + H2O. The enzyme catalyses D-fuconate = 2-dehydro-3-deoxy-D-fuconate + H2O. It functions in the pathway carbohydrate metabolism. Functionally, catalyzes the dehydration of L-arabinonate to 2-dehydro-3-deoxy-L-arabinonate during L-arabinose degradation. Can also dehydrate D-galactonate and D-fuconate with good catalytic efficiency. Has weak activity with D-xylonate and D-gluconate. The polypeptide is L-arabinonate dehydratase (Rhizobium leguminosarum bv. trifolii (strain WSM2304)).